A 106-amino-acid polypeptide reads, in one-letter code: Aspartyl/glutamyl-tRNA(Asn/Gln) amidotransferase subunit C (106 aa).

Belongs to the GatC family. Heterotrimer of A, B and C subunits.

It catalyses the reaction L-glutamyl-tRNA(Gln) + L-glutamine + ATP + H2O = L-glutaminyl-tRNA(Gln) + L-glutamate + ADP + phosphate + H(+). The catalysed reaction is L-aspartyl-tRNA(Asn) + L-glutamine + ATP + H2O = L-asparaginyl-tRNA(Asn) + L-glutamate + ADP + phosphate + 2 H(+). Allows the formation of correctly charged Asn-tRNA(Asn) or Gln-tRNA(Gln) through the transamidation of misacylated Asp-tRNA(Asn) or Glu-tRNA(Gln) in organisms which lack either or both of asparaginyl-tRNA or glutaminyl-tRNA synthetases. The reaction takes place in the presence of glutamine and ATP through an activated phospho-Asp-tRNA(Asn) or phospho-Glu-tRNA(Gln). The sequence is that of Aspartyl/glutamyl-tRNA(Asn/Gln) amidotransferase subunit C from Lactiplantibacillus plantarum (strain ATCC BAA-793 / NCIMB 8826 / WCFS1) (Lactobacillus plantarum).